A 192-amino-acid chain; its full sequence is Leucine-rich repeat-containing protein 51 (192 aa).

LRR repeat units follow at residues 49–71, 80–101, and 103–124; these read SLTQSLWLNNNVLNDLKDFNQVV, NLAWIDLSFNDLTTIDPVLTTF, and NLSVLYLHGNGIHRLGEVNKLA. Residues 137-175 enclose the LRRCT domain; it reads NPIEEEKGYRQYVLCNLPRITTFDFSGVTRADRSTAEVW.

Widely expressed in adult and embryonic tissues. Expressed in the developing choroid plexus from 12.5 dpc and in the epithelium of the developing airway tract from 14.5 dpc. Also expressed in the postnatal inner ear.

Its subcellular location is the cytoplasm. This is Leucine-rich repeat-containing protein 51 from Mus musculus (Mouse).